A 306-amino-acid chain; its full sequence is MEEVLKLKIPASTANLGVGFDSIGMALDKYLHMSIRKIERANWEFLYYSSELEGLPKDENNYIYQTALNVARKYNVTLPSLQIEMRSDIPLARGLGSSASALVGALFIANYFGNIQLSKYELLQLATEIEGHPDNVAPTIYGGLIAGFYNPITKITDVARIEVPHVDIILTIPPYELRTEDSRRVLPDTFSHKGAVQNSAISNTMICALIQHKYKLAGKMMEQDGFHEPYRQHLIPEFNQVRKLSRQHDAYATVISGAGPTILTLCPKEKSGKLVRTLREKINNCASELVTINEIGVKDEVVYLKS.

90 to 100 (PLARGLGSSAS) contributes to the ATP binding site.

Belongs to the GHMP kinase family. Homoserine kinase subfamily.

It localises to the cytoplasm. It carries out the reaction L-homoserine + ATP = O-phospho-L-homoserine + ADP + H(+). Its pathway is amino-acid biosynthesis; L-threonine biosynthesis; L-threonine from L-aspartate: step 4/5. Catalyzes the ATP-dependent phosphorylation of L-homoserine to L-homoserine phosphate. This is Homoserine kinase from Staphylococcus epidermidis (strain ATCC 35984 / DSM 28319 / BCRC 17069 / CCUG 31568 / BM 3577 / RP62A).